The sequence spans 380 residues: Carbamoyl phosphate synthase small chain (380 aa).

Residues 1–187 are CPSase; that stretch reads MTTSTRGAAK…VVPAIGAKRF (187 aa). Positions 55, 236, and 238 each coordinate L-glutamine. The region spanning 188-380 is the Glutamine amidotransferase type-1 domain; the sequence is TVAAVDLGIK…FVSLMEGQRA (193 aa). C264 acts as the Nucleophile in catalysis. L-glutamine-binding residues include F265, Q268, N306, G308, and F309. Active-site residues include H354 and E356.

Belongs to the CarA family. In terms of assembly, composed of two chains; the small (or glutamine) chain promotes the hydrolysis of glutamine to ammonia, which is used by the large (or ammonia) chain to synthesize carbamoyl phosphate. Tetramer of heterodimers (alpha,beta)4.

The catalysed reaction is hydrogencarbonate + L-glutamine + 2 ATP + H2O = carbamoyl phosphate + L-glutamate + 2 ADP + phosphate + 2 H(+). It carries out the reaction L-glutamine + H2O = L-glutamate + NH4(+). The protein operates within amino-acid biosynthesis; L-arginine biosynthesis; carbamoyl phosphate from bicarbonate: step 1/1. It participates in pyrimidine metabolism; UMP biosynthesis via de novo pathway; (S)-dihydroorotate from bicarbonate: step 1/3. Its function is as follows. Small subunit of the glutamine-dependent carbamoyl phosphate synthetase (CPSase). CPSase catalyzes the formation of carbamoyl phosphate from the ammonia moiety of glutamine, carbonate, and phosphate donated by ATP, constituting the first step of 2 biosynthetic pathways, one leading to arginine and/or urea and the other to pyrimidine nucleotides. The small subunit (glutamine amidotransferase) binds and cleaves glutamine to supply the large subunit with the substrate ammonia. The sequence is that of Carbamoyl phosphate synthase small chain from Streptomyces avermitilis (strain ATCC 31267 / DSM 46492 / JCM 5070 / NBRC 14893 / NCIMB 12804 / NRRL 8165 / MA-4680).